The sequence spans 163 residues: Photosystem II extrinsic protein V (163 aa).

An N-terminal signal peptide occupies residues 1-26 (MFRRLIGVVVATVLLSFQLLVGSATA). Cys-63, Cys-66, His-67, and His-118 together coordinate heme c.

It belongs to the cytochrome c family. PsbV subfamily. As to quaternary structure, PSII is composed of 1 copy each of membrane proteins PsbA, PsbB, PsbC, PsbD, PsbE, PsbF, PsbH, PsbI, PsbJ, PsbK, PsbL, PsbM, PsbT, PsbX, PsbY, PsbZ, Psb30/Ycf12, peripheral proteins PsbO, CyanoQ (PsbQ), PsbU, PsbV and a large number of cofactors. It forms dimeric complexes. The cofactor is heme c.

It localises to the cellular thylakoid membrane. Functionally, one of the extrinsic, lumenal subunits of photosystem II (PSII). PSII is a light-driven water plastoquinone oxidoreductase, using light energy to abstract electrons from H(2)O, generating a proton gradient subsequently used for ATP formation. The extrinsic proteins stabilize the structure of photosystem II oxygen-evolving complex (OEC), the ion environment of oxygen evolution and protect the OEC against heat-induced inactivation. Low-potential cytochrome c that plays a role in the OEC of PSII. The protein is Photosystem II extrinsic protein V of Nostoc punctiforme (strain ATCC 29133 / PCC 73102).